The primary structure comprises 402 residues: NADH-quinone oxidoreductase subunit D (402 aa).

The protein belongs to the complex I 49 kDa subunit family. NDH-1 is composed of 14 different subunits. Subunits NuoB, C, D, E, F, and G constitute the peripheral sector of the complex.

It is found in the cell inner membrane. The catalysed reaction is a quinone + NADH + 5 H(+)(in) = a quinol + NAD(+) + 4 H(+)(out). Its function is as follows. NDH-1 shuttles electrons from NADH, via FMN and iron-sulfur (Fe-S) centers, to quinones in the respiratory chain. The immediate electron acceptor for the enzyme in this species is believed to be ubiquinone. Couples the redox reaction to proton translocation (for every two electrons transferred, four hydrogen ions are translocated across the cytoplasmic membrane), and thus conserves the redox energy in a proton gradient. This Rhodopseudomonas palustris (strain TIE-1) protein is NADH-quinone oxidoreductase subunit D.